Here is a 319-residue protein sequence, read N- to C-terminus: ATP-dependent 6-phosphofructokinase (319 aa).

Gly-11 provides a ligand contact to ATP. 21 to 25 (RAVVR) serves as a coordination point for ADP. ATP is bound by residues 72–73 (RC) and 102–105 (GDGS). Asp-103 contributes to the Mg(2+) binding site. 125–127 (TID) is a substrate binding site. Asp-127 serves as the catalytic Proton acceptor. Position 154 (Arg-154) interacts with ADP. Substrate contacts are provided by residues Arg-162 and 169-171 (MGR). Residues 185–187 (GAE), Arg-211, and 213–215 (KKH) contribute to the ADP site. Substrate-binding positions include Glu-222, Arg-243, and 249 to 252 (HMQR).

Belongs to the phosphofructokinase type A (PFKA) family. ATP-dependent PFK group I subfamily. Prokaryotic clade 'B1' sub-subfamily. As to quaternary structure, homotetramer. Requires Mg(2+) as cofactor.

The protein localises to the cytoplasm. It catalyses the reaction beta-D-fructose 6-phosphate + ATP = beta-D-fructose 1,6-bisphosphate + ADP + H(+). It participates in carbohydrate degradation; glycolysis; D-glyceraldehyde 3-phosphate and glycerone phosphate from D-glucose: step 3/4. With respect to regulation, allosterically activated by ADP and other diphosphonucleosides, and allosterically inhibited by phosphoenolpyruvate. Functionally, catalyzes the phosphorylation of D-fructose 6-phosphate to fructose 1,6-bisphosphate by ATP, the first committing step of glycolysis. In Macrococcus caseolyticus (strain JCSC5402) (Macrococcoides caseolyticum), this protein is ATP-dependent 6-phosphofructokinase.